A 405-amino-acid polypeptide reads, in one-letter code: Scramblase ANY1 (405 aa).

Residues 1 to 51 (MSTTGPLDATLIRDVAVATATKASYDMSDTLYSYLPKVDQFYIPEWLTMQF) lie on the Cytoplasmic side of the membrane. A helical membrane pass occupies residues 52–72 (IANNLISFTPLFSYGTTIISI). Residues 73–76 (EKCK) are Lumenal-facing. Residues 77–97 (TALGFSIDICATMLIASILRI) traverse the membrane as a helical segment. Topologically, residues 98-103 (SYYLIT) are cytoplasmic. Residues 104 to 124 (PYEITLLRQSLVMIFIQLILL) traverse the membrane as a helical segment. Topologically, residues 125-177 (RTSLKYRPDEYKYQNLTDVESLSHLIHDIWFEFFSCINRPKFLSEDWKNLIKS) are lumenal. Residues 178-198 (LSFTNLLKFSFKIFLAFFYKI) traverse the membrane as a helical segment. Residues 199–223 (LKFFDPNFKRIGAFWQWDDDKNFWR) lie on the Cytoplasmic side of the membrane. The helical transmembrane segment at 224–244 (FLALFATVQILVTFFISNILN) threads the bilayer. Residues 245–254 (WDSLAQGLGS) are Lumenal-facing. The PQ-loop domain occupies 252–309 (LGSIIGSLGLLVESLLPLPQIAILYKLKSVQGFKLILLVSWLCGDTLKITYLIFGAKN). The chain crosses the membrane as a helical span at residues 255–275 (IIGSLGLLVESLLPLPQIAIL). The Cytoplasmic segment spans residues 276-283 (YKLKSVQG). The helical transmembrane segment at 284–306 (FKLILLVSWLCGDTLKITYLIFG) threads the bilayer. Over 307–312 (AKNISA) the chain is Lumenal. A helical membrane pass occupies residues 313–335 (LFVIFALFQMSLDFYIGGQYIYY). Over 336 to 405 (RYYYPKLRHQ…GKSQAQAVTL (70 aa)) the chain is Cytoplasmic. The tract at residues 379–405 (LKQDSNDTSDSPQDDQVGKSQAQAVTL) is disordered. Residues 396–405 (GKSQAQAVTL) show a composition bias toward polar residues.

As to quaternary structure, interacts with NEO1.

Its subcellular location is the golgi apparatus membrane. It localises to the late endosome membrane. In terms of biological role, phospholipid scramblase that transports phosphatidylserine (PS) and phosphatidylethalonamine (PE) bidirectionally from one leaflet to the other of the phospholipid bilayer to at least partially collapse the membrane asymmetry established by NEO1 and other flippases. The PS scramblase activity has been disputed. Functions in the trafficking pathway from endosomes to the trans-Golgi network (TGN). The polypeptide is Scramblase ANY1 (Saccharomyces cerevisiae (strain ATCC 204508 / S288c) (Baker's yeast)).